The primary structure comprises 134 residues: Small ribosomal subunit protein uS8 (134 aa).

It belongs to the universal ribosomal protein uS8 family. Part of the 30S ribosomal subunit. Contacts proteins S5 and S12.

In terms of biological role, one of the primary rRNA binding proteins, it binds directly to 16S rRNA central domain where it helps coordinate assembly of the platform of the 30S subunit. This chain is Small ribosomal subunit protein uS8, found in Thermotoga neapolitana (strain ATCC 49049 / DSM 4359 / NBRC 107923 / NS-E).